We begin with the raw amino-acid sequence, 312 residues long: Olfactory receptor 51B2 (312 aa).

Over 1–23 the chain is Extracellular; the sequence is MWPNITAAPFLLTGFPGLEAAHH. Asn-4 carries N-linked (GlcNAc...) asparagine glycosylation. A helical transmembrane segment spans residues 24 to 44; sequence WISIPFFAVYVCILLGNGMLL. Residues 45-52 lie on the Cytoplasmic side of the membrane; sequence YLIKHDHS. A helical membrane pass occupies residues 53 to 73; the sequence is LHEPMYYFLTMLAGTDLMVTL. Over 74 to 97 the chain is Extracellular; the sequence is TTMPTVMGILWVNHREISSVGCFL. Cys-95 and Cys-187 are joined by a disulfide. The chain crosses the membrane as a helical span at residues 98–118; sequence QAYFIHSLSVVESGSLLAMAY. The Cytoplasmic portion of the chain corresponds to 119–137; the sequence is DCFIAIRNPLRYASILTNT. A helical membrane pass occupies residues 138-158; the sequence is RVIALGVGVFLRGFVSILPVI. Residues 159–194 lie on the Extracellular side of the membrane; sequence LRLFSFSYCKSHVITRAFCLHQEIMRLACADITFNR. Residues 195–215 form a helical membrane-spanning segment; the sequence is LYPVILISLTIFLDCLIILFS. Residues 216–235 are Cytoplasmic-facing; sequence YILILNTVIGIASGEERAKA. A helical membrane pass occupies residues 236-256; sequence LNTCISHISCVLIFYVTVMGL. The Extracellular portion of the chain corresponds to 257 to 271; the sequence is TFIYRFGKNVPEVVH. The helical transmembrane segment at 272–292 threads the bilayer; sequence IIMSYIYFLFPPLMNPVIYSI. Residues 293-312 lie on the Cytoplasmic side of the membrane; it reads KTKQIQYGIIRLLSKHRFSS.

It belongs to the G-protein coupled receptor 1 family. Post-translationally, ubiquitinated by the CRL2(FEM1A) and CRL2(FEM1C) complexes, which recognize the -Lys-Xaa-Xaa-Arg C-degron at the C-terminus, leading to its degradation.

It localises to the cell membrane. In terms of biological role, odorant receptor. In Homo sapiens (Human), this protein is Olfactory receptor 51B2 (OR51B2).